A 248-amino-acid chain; its full sequence is Probable septum site-determining protein MinC (248 aa).

The segment at 94–125 is disordered; sequence GMPPAMRGGQPAADFEAPAGEPQANPGAPEPQ.

It belongs to the MinC family. As to quaternary structure, interacts with MinD and FtsZ.

Its function is as follows. Cell division inhibitor that blocks the formation of polar Z ring septums. Rapidly oscillates between the poles of the cell to destabilize FtsZ filaments that have formed before they mature into polar Z rings. Prevents FtsZ polymerization. The protein is Probable septum site-determining protein MinC of Brucella abortus (strain S19).